The chain runs to 44 residues: Thymosin beta-4 (44 aa).

The segment covering 1–25 (MADKPDMAEIEKFDKSKLKKTETQE) has biased composition (basic and acidic residues). The interval 1–44 (MADKPDMAEIEKFDKSKLKKTETQEKNPLPSKETIEQEKQAGES) is disordered. The residue at position 2 (A2) is an N-acetylalanine. The residue at position 4 (K4) is an N6-acetyllysine. K12 carries the N6-acetyllysine; alternate modification. Residue K12 forms a Glycyl lysine isopeptide (Lys-Gly) (interchain with G-Cter in SUMO2); alternate linkage. At T23 the chain carries Phosphothreonine. K26 is subject to N6-acetyllysine. The residue at position 31 (S31) is a Phosphoserine. K32 is subject to N6-acetyllysine. Residues 33–44 (ETIEQEKQAGES) show a composition bias toward basic and acidic residues. At T34 the chain carries Phosphothreonine. At K39 the chain carries N6-acetyllysine.

It belongs to the thymosin beta family. Originally found in thymus but it is widely distributed in many tissues.

The protein resides in the cytoplasm. Its subcellular location is the cytoskeleton. Its function is as follows. Plays an important role in the organization of the cytoskeleton. Binds to and sequesters actin monomers (G actin) and therefore inhibits actin polymerization. Seraspenide inhibits the entry of hematopoietic pluripotent stem cells into the S-phase. The protein is Thymosin beta-4 (TMSB4) of Oryctolagus cuniculus (Rabbit).